The following is a 284-amino-acid chain: MQHQPKKKYGQNFLKDVNLLKKIVSKANLKGKNVIEIGPGKGSLTNLITKEANLLLAYEIDPTLKPFLVFDTTKIKIIYDDFLKRDLVKDFDNYFSINCQLSLISNLPYYITTTILFKIIQTPQIVDATLMMQKEVGMRLMAQPNSKNYNALSVITQYFFNIEKIQEVKSHMFFPQPKVDSVVLKLSKHKSDFNTFSTSSQKNFITFVKAAFKQKRKTLLNNLSSVFLLPKTEIILFFEQNKLLTKIRAEEITLKEFQKISIQWFLFQNKTKESQLNNYILKKV.

Residues N12, L14, G38, E59, D81, and N106 each contribute to the S-adenosyl-L-methionine site.

Belongs to the class I-like SAM-binding methyltransferase superfamily. rRNA adenine N(6)-methyltransferase family. RsmA subfamily.

Its subcellular location is the cytoplasm. The catalysed reaction is adenosine(1518)/adenosine(1519) in 16S rRNA + 4 S-adenosyl-L-methionine = N(6)-dimethyladenosine(1518)/N(6)-dimethyladenosine(1519) in 16S rRNA + 4 S-adenosyl-L-homocysteine + 4 H(+). Its function is as follows. Specifically dimethylates two adjacent adenosines (A1518 and A1519) in the loop of a conserved hairpin near the 3'-end of 16S rRNA in the 30S particle. May play a critical role in biogenesis of 30S subunits. The chain is Ribosomal RNA small subunit methyltransferase A from Phytoplasma australiense.